Reading from the N-terminus, the 320-residue chain is 4-hydroxy-3-methylbut-2-enyl diphosphate reductase 2 (320 aa).

Residue Cys-18 coordinates [4Fe-4S] cluster. Positions 47 and 81 each coordinate (2E)-4-hydroxy-3-methylbut-2-enyl diphosphate. Dimethylallyl diphosphate-binding residues include His-47 and His-81. Isopentenyl diphosphate-binding residues include His-47 and His-81. Cys-103 contributes to the [4Fe-4S] cluster binding site. His-131 contacts (2E)-4-hydroxy-3-methylbut-2-enyl diphosphate. Residue His-131 coordinates dimethylallyl diphosphate. His-131 contacts isopentenyl diphosphate. The active-site Proton donor is Glu-133. Position 172 (Thr-172) interacts with (2E)-4-hydroxy-3-methylbut-2-enyl diphosphate. Residue Cys-202 participates in [4Fe-4S] cluster binding. (2E)-4-hydroxy-3-methylbut-2-enyl diphosphate is bound by residues Ser-230, Ser-231, Asn-232, and Ser-275. Dimethylallyl diphosphate-binding residues include Ser-230, Ser-231, Asn-232, and Ser-275. 4 residues coordinate isopentenyl diphosphate: Ser-230, Ser-231, Asn-232, and Ser-275.

Belongs to the IspH family. [4Fe-4S] cluster is required as a cofactor.

The catalysed reaction is isopentenyl diphosphate + 2 oxidized [2Fe-2S]-[ferredoxin] + H2O = (2E)-4-hydroxy-3-methylbut-2-enyl diphosphate + 2 reduced [2Fe-2S]-[ferredoxin] + 2 H(+). It catalyses the reaction dimethylallyl diphosphate + 2 oxidized [2Fe-2S]-[ferredoxin] + H2O = (2E)-4-hydroxy-3-methylbut-2-enyl diphosphate + 2 reduced [2Fe-2S]-[ferredoxin] + 2 H(+). It participates in isoprenoid biosynthesis; dimethylallyl diphosphate biosynthesis; dimethylallyl diphosphate from (2E)-4-hydroxy-3-methylbutenyl diphosphate: step 1/1. The protein operates within isoprenoid biosynthesis; isopentenyl diphosphate biosynthesis via DXP pathway; isopentenyl diphosphate from 1-deoxy-D-xylulose 5-phosphate: step 6/6. Its function is as follows. Catalyzes the conversion of 1-hydroxy-2-methyl-2-(E)-butenyl 4-diphosphate (HMBPP) into a mixture of isopentenyl diphosphate (IPP) and dimethylallyl diphosphate (DMAPP). Acts in the terminal step of the DOXP/MEP pathway for isoprenoid precursor biosynthesis. This chain is 4-hydroxy-3-methylbut-2-enyl diphosphate reductase 2, found in Rhodopseudomonas palustris (strain ATCC BAA-98 / CGA009).